A 100-amino-acid chain; its full sequence is C-X-C motif chemokine 2 (100 aa).

The N-terminal stretch at 1–27 is a signal peptide; it reads MAPPTCRLLSAALVLLLLLATNHQATG. Intrachain disulfides connect cysteine 36–cysteine 62 and cysteine 38–cysteine 78.

This sequence belongs to the intercrine alpha (chemokine CxC) family. In terms of assembly, homotetramer.

Its subcellular location is the secreted. Functionally, chemotactic for human polymorphonuclear leukocytes but does not induce chemokinesis or an oxidative burst. The sequence is that of C-X-C motif chemokine 2 (Cxcl2) from Mus musculus (Mouse).